The primary structure comprises 771 residues: Probable aconitate hydratase, mitochondrial (771 aa).

Residues Gln86 and 179-181 (DSH) each bind substrate. Cys372, Cys435, and Cys438 together coordinate [4Fe-4S] cluster. Residues Arg461, Arg466, Arg594, and 657–658 (SR) each bind substrate.

It belongs to the aconitase/IPM isomerase family. As to quaternary structure, monomer. It depends on [4Fe-4S] cluster as a cofactor.

The protein localises to the mitochondrion. It carries out the reaction citrate = D-threo-isocitrate. Its pathway is carbohydrate metabolism; tricarboxylic acid cycle; isocitrate from oxaloacetate: step 2/2. Its function is as follows. Catalyzes the isomerization of citrate to isocitrate via cis-aconitate. In Dictyostelium discoideum (Social amoeba), this protein is Probable aconitate hydratase, mitochondrial (aco2).